A 170-amino-acid polypeptide reads, in one-letter code: Ureidoglycolate lyase (170 aa).

Belongs to the ureidoglycolate lyase family. As to quaternary structure, homodimer. Ni(2+) serves as cofactor.

The enzyme catalyses (S)-ureidoglycolate = urea + glyoxylate. Its pathway is nitrogen metabolism; (S)-allantoin degradation. Functionally, catalyzes the catabolism of the allantoin degradation intermediate (S)-ureidoglycolate, generating urea and glyoxylate. Involved in the utilization of allantoin as nitrogen source. The chain is Ureidoglycolate lyase from Pseudomonas syringae pv. syringae (strain B728a).